Here is a 315-residue protein sequence, read N- to C-terminus: Biotin synthase (315 aa).

One can recognise a Radical SAM core domain in the interval asparagine 39–arginine 266. Residues cysteine 54, cysteine 58, and cysteine 61 each contribute to the [4Fe-4S] cluster site. [2Fe-2S] cluster-binding residues include cysteine 98, cysteine 129, cysteine 189, and arginine 261.

This sequence belongs to the radical SAM superfamily. Biotin synthase family. As to quaternary structure, homodimer. Requires [4Fe-4S] cluster as cofactor. [2Fe-2S] cluster serves as cofactor.

It catalyses the reaction (4R,5S)-dethiobiotin + (sulfur carrier)-SH + 2 reduced [2Fe-2S]-[ferredoxin] + 2 S-adenosyl-L-methionine = (sulfur carrier)-H + biotin + 2 5'-deoxyadenosine + 2 L-methionine + 2 oxidized [2Fe-2S]-[ferredoxin]. The protein operates within cofactor biosynthesis; biotin biosynthesis; biotin from 7,8-diaminononanoate: step 2/2. In terms of biological role, catalyzes the conversion of dethiobiotin (DTB) to biotin by the insertion of a sulfur atom into dethiobiotin via a radical-based mechanism. In Legionella pneumophila (strain Corby), this protein is Biotin synthase.